A 222-amino-acid chain; its full sequence is MNSTPKAVVIFSGGQDSTTCLFQAIQEFGVKNVEVVTFQYGQRHAIELEKAAWIAKDLGVKQTLIDTSVIKAITSNAMMEEREIKQEGNTPNTFVDGRNALFLLYTAIYAKGQGIRTIFTGVCETDFSGYPDCRDVFVKSMNVTLNLAMDYNFNIRTPLMYLTKKQTWALADKLGAFDYIRQHTHTCYLGVEGGCHTCPSCVLREKGLNEYLSEKTSGQKNV.

Position 11-21 (11-21 (FSGGQDSTTCL)) interacts with ATP. Zn(2+) is bound by residues Cys-187, Cys-195, Cys-198, and Cys-201.

Belongs to the QueC family. The cofactor is Zn(2+).

The catalysed reaction is 7-carboxy-7-deazaguanine + NH4(+) + ATP = 7-cyano-7-deazaguanine + ADP + phosphate + H2O + H(+). The protein operates within purine metabolism; 7-cyano-7-deazaguanine biosynthesis. In terms of biological role, catalyzes the ATP-dependent conversion of 7-carboxy-7-deazaguanine (CDG) to 7-cyano-7-deazaguanine (preQ(0)). This is 7-cyano-7-deazaguanine synthase from Actinobacillus pleuropneumoniae serotype 3 (strain JL03).